The following is a 507-amino-acid chain: Dolichyl pyrophosphate Man9GlcNAc2 alpha-1,3-glucosyltransferase (507 aa).

Residues 1-3 (MEK) are Cytoplasmic-facing. The helical transmembrane segment at 4–24 (WYLMTVVVLIGLTVRWTVSLN) threads the bilayer. Residues 25–114 (SYSGAGKPPM…SQAHKLFMRT (90 aa)) lie on the Lumenal side of the membrane. The N-linked (GlcNAc...) asparagine glycan is linked to N59. A helical membrane pass occupies residues 115-135 (TVLIADLLIYIPAVVLYCCCL). The Cytoplasmic portion of the chain corresponds to 136–143 (KEISTKKK). A helical transmembrane segment spans residues 144-164 (IANALCILLYPGLILIDYGHF). Over 165-172 (QYNSVSLG) the chain is Lumenal. Residues 173–193 (FALWGVLGISCDCDLLGSLAF) traverse the membrane as a helical segment. Residues 194–226 (CLAINYKQMELYHALPFFCFLLGKCFKKGLKGK) lie on the Cytoplasmic side of the membrane. Residues 227–247 (GFVLLVKLACIVVASFVLCWL) traverse the membrane as a helical segment. Over 248-297 (PFFTEREQTLQVLRRLFPVDRGLFEDKVANIWCSFNVFLKIKDILPRHIQ) the chain is Lumenal. A helical transmembrane segment spans residues 298–318 (LIMSFCFTFLSLLPACIKLIL). Residues 319–323 (QPSSK) are Cytoplasmic-facing. Residues 324 to 344 (GFKFTLVSCALSFFLFSFQVH) form a helical membrane-spanning segment. Topologically, residues 345-361 (EKSILLVSLPVCLVLSE) are lumenal. A helical membrane pass occupies residues 362-382 (IPFMSTWFLLVSTFSMLPLLL). At 383 to 387 (KDELL) the chain is on the cytoplasmic side. The helical transmembrane segment at 388–408 (MPSVVTTMAFFIACVTSFSIF) threads the bilayer. The Lumenal segment spans residues 409–437 (EKTSEEELQLKSFSISVRKYLPCFTFLSR). A helical membrane pass occupies residues 438–458 (IIQYLFLISVITMVLLTLMTV). The Cytoplasmic segment spans residues 459–473 (TLGPPQKLPDLFSVL). The chain crosses the membrane as a helical span at residues 474-494 (VCFVSCLNFLFFLVYFNIIIV). Residues 495 to 507 (WDSKSGRNQKKIS) are Lumenal-facing.

The protein belongs to the ALG6/ALG8 glucosyltransferase family.

The protein localises to the endoplasmic reticulum membrane. The enzyme catalyses an alpha-D-Man-(1-&gt;2)-alpha-D-Man-(1-&gt;2)-alpha-D-Man-(1-&gt;3)-[alpha-D-Man-(1-&gt;2)-alpha-D-Man-(1-&gt;3)-[alpha-D-Man-(1-&gt;2)-alpha-D-Man-(1-&gt;6)]-alpha-D-Man-(1-&gt;6)]-beta-D-Man-(1-&gt;4)-beta-D-GlcNAc-(1-&gt;4)-alpha-D-GlcNAc-diphospho-di-trans,poly-cis-dolichol + a di-trans,poly-cis-dolichyl beta-D-glucosyl phosphate = an alpha-D-Glc-(1-&gt;3)-alpha-D-Man-(1-&gt;2)-alpha-D-Man-(1-&gt;2)-alpha-D-Man-(1-&gt;3)-[alpha-D-Man-(1-&gt;2)-alpha-D-Man-(1-&gt;3)-[alpha-D-Man-(1-&gt;2)-alpha-D-Man-(1-&gt;6)]-alpha-D-Man-(1-&gt;6)]-beta-D-Man-(1-&gt;4)-beta-D-GlcNAc-(1-&gt;4)-alpha-D-GlcNAc-diphospho-di-trans,poly-cis-dolichol + a di-trans,poly-cis-dolichyl phosphate + H(+). It functions in the pathway protein modification; protein glycosylation. Its function is as follows. Dolichyl pyrophosphate Man9GlcNAc2 alpha-1,3-glucosyltransferase that operates in the biosynthetic pathway of dolichol-linked oligosaccharides, the glycan precursors employed in protein asparagine (N)-glycosylation. The assembly of dolichol-linked oligosaccharides begins on the cytosolic side of the endoplasmic reticulum membrane and finishes in its lumen. The sequential addition of sugars to dolichol pyrophosphate produces dolichol-linked oligosaccharides containing fourteen sugars, including two GlcNAcs, nine mannoses and three glucoses. Once assembled, the oligosaccharide is transferred from the lipid to nascent proteins by oligosaccharyltransferases. In the lumen of the endoplasmic reticulum, adds the first glucose residue from dolichyl phosphate glucose (Dol-P-Glc) onto the lipid-linked oligosaccharide intermediate Man(9)GlcNAc(2)-PP-Dol to produce Glc(1)Man(9)GlcNAc(2)-PP-Dol. Glc(1)Man(9)GlcNAc(2)-PP-Dol is a substrate for ALG8, the following enzyme in the biosynthetic pathway. This is Dolichyl pyrophosphate Man9GlcNAc2 alpha-1,3-glucosyltransferase from Pongo abelii (Sumatran orangutan).